A 609-amino-acid polypeptide reads, in one-letter code: UvrABC system protein C (609 aa).

One can recognise a GIY-YIG domain in the interval 16–94; that stretch reads SSPGVYRMYD…IKQYMPKYNV (79 aa). One can recognise a UVR domain in the interval 203–238; that stretch reads QQVTKALVAKMEQAAVELNYEQAARYRDQITALRRV.

The protein belongs to the UvrC family. In terms of assembly, interacts with UvrB in an incision complex.

It localises to the cytoplasm. Its function is as follows. The UvrABC repair system catalyzes the recognition and processing of DNA lesions. UvrC both incises the 5' and 3' sides of the lesion. The N-terminal half is responsible for the 3' incision and the C-terminal half is responsible for the 5' incision. The sequence is that of UvrABC system protein C from Shewanella piezotolerans (strain WP3 / JCM 13877).